Consider the following 220-residue polypeptide: MARMKARSAKGKRVAKDTWKSKVWYNIYTPQSFGGDVIGQTPANDPSALMGRISEISLRDLTNEHSKHMTRMYFKVDGVSGNNAITQFVGHDTTREYLKSQIRRRRSKINVIIDVRTKDGFKVRVKALVLTAVRARDYHKTEIRVKMEQIIKEMANETAFAEFVHAMVMGGVGSKIYSECKKMFPLKRVEIFKSEVLEFGKAVLEVTPEAQEAVEGEEKQ.

Belongs to the eukaryotic ribosomal protein eS1 family.

The polypeptide is Small ribosomal subunit protein eS1 (Methanococcus vannielii (strain ATCC 35089 / DSM 1224 / JCM 13029 / OCM 148 / SB)).